A 290-amino-acid chain; its full sequence is Pirin (290 aa).

His56, His58, His101, and Glu103 together coordinate Fe cation.

Belongs to the pirin family. May interact with NF1/CTF1. Interacts with BCL3. Identified in a complex comprised of PIR, BLC3, NFKB1 and target DNA. It depends on Fe cation as a cofactor. Weakly expressed in bone marrow.

The protein localises to the nucleus. It is found in the cytoplasm. It catalyses the reaction quercetin + O2 = 2-(3,4-dihydroxybenzoyloxy)-4,6-dihydroxybenzoate + CO. Its pathway is flavonoid metabolism; quercetin degradation. Transcriptional coregulator of NF-kappa-B which facilitates binding of NF-kappa-B proteins to target kappa-B genes in a redox-state-dependent manner. May be required for efficient terminal myeloid maturation of hematopoietic cells. Has quercetin 2,3-dioxygenase activity (in vitro). In Mus musculus (Mouse), this protein is Pirin (Pir).